The primary structure comprises 470 residues: uncharacterized protein (470 aa).

The first 24 residues, 1–24 (MKKLVGSLAAISVLSATGFSYVGY), serve as a signal peptide directing secretion.

This is an uncharacterized protein from Mycoplasma capricolum subsp. capricolum (strain California kid / ATCC 27343 / NCTC 10154).